A 250-amino-acid chain; its full sequence is N-acyl homoserine lactonase (250 aa).

Positions 104, 106, 108, 109, 169, 191, and 235 each coordinate Zn(2+).

The protein belongs to the metallo-beta-lactamase superfamily. Monomer. Zn(2+) is required as a cofactor.

The catalysed reaction is an N-acyl-L-homoserine lactone + H2O = an N-acyl-L-homoserine + H(+). Catalyzes hydrolysis of N-hexanoyl-(S)-homoserine lactone, but not the R-enantiomer. Hydrolyzes short- and long-chain N-acyl homoserine lactones with or without 3-oxo substitution at C3, has maximum activity on C10-AHL. In Bacillus thuringiensis subsp. indiana, this protein is N-acyl homoserine lactonase.